The chain runs to 513 residues: Na(+)/H(+) antiporter NhaB (513 aa).

The next 11 membrane-spanning stretches (helical) occupy residues 21–41 (LCIITFLVINPLIYFFVSPFI), 43–63 (GWTLVAEFIFTLSMALKCYPL), 88–108 (IIANFEVILLLMFMVAGIYFM), 137–157 (AAFLSAFLDALTVIAVIISVG), 202–222 (LLMHAAVGSALGGVMTMVGEP), 235–255 (FIEFLIRVAPVSLPVLICGIA), 299–318 (MAIQALAGIWLIVGLALHLA), 322–344 (IIGLTIIIICTAFCGITDEHAIG), 350–370 (PMPFTALIVVFFTIVAVIVDL), 389–409 (LALFYVFNGLLSMISDNVFVG), and 477–497 (MALPYTIVLSIVGFFALEYLL).

The protein belongs to the NhaB Na(+)/H(+) (TC 2.A.34) antiporter family.

The protein resides in the cell inner membrane. The enzyme catalyses 2 Na(+)(in) + 3 H(+)(out) = 2 Na(+)(out) + 3 H(+)(in). Na(+)/H(+) antiporter that extrudes sodium in exchange for external protons. The sequence is that of Na(+)/H(+) antiporter NhaB from Haemophilus ducreyi (strain 35000HP / ATCC 700724).